A 713-amino-acid polypeptide reads, in one-letter code: Calpain-1 catalytic subunit (713 aa).

The 300-residue stretch at 55 to 354 folds into the Calpain catalytic domain; it reads LFQDDAFPPV…FTKLEICNLT (300 aa). Residues C115, H272, and N296 contribute to the active site. The residue at position 354 (T354) is a Phosphothreonine. The domain III stretch occupies residues 355 to 525; sequence PDALKSRTLR…KKAGTQELDD (171 aa). The segment at 526–541 is linker; sequence QIQANLPDEKVLSEEE. The segment at 542-712 is domain IV; the sequence is IDDNFKTLFS…LFKWLQLTMF (171 aa). 4 consecutive EF-hand domains span residues 557-575, 584-609, 614-649, and 679-713; these read DMEI…IISK, FSLE…LVEF, NRIR…AGFK, and VRLE…TMFA. The Ca(2+) site is built by D597, D599, N601, K603, E608, D627, D629, S631, S633, and E638.

It belongs to the peptidase C2 family. As to quaternary structure, forms a heterodimer with a small (regulatory) subunit CAPNS1. Ca(2+) is required as a cofactor. Undergoes calcium-induced successive autoproteolytic cleavages that generate a membrane-bound 78 kDa active form and an intracellular 75 kDa active form. Calpastatin reduces with high efficiency the transition from 78 kDa to 75 kDa calpain forms.

It localises to the cytoplasm. Its subcellular location is the cell membrane. It carries out the reaction Broad endopeptidase specificity.. Its activity is regulated as follows. Activated by micromolar concentrations of calcium and inhibited by calpastatin. Calcium-regulated non-lysosomal thiol-protease which catalyzes limited proteolysis of substrates involved in cytoskeletal remodeling and signal transduction. Proteolytically cleaves CTBP1 at 'Asn-364', 'Gly-377' and 'His-399'. Cleaves and activates caspase-7 (CASP7). In Rattus norvegicus (Rat), this protein is Calpain-1 catalytic subunit.